A 223-amino-acid polypeptide reads, in one-letter code: Leucyl/phenylalanyl-tRNA--protein transferase (223 aa).

The protein belongs to the L/F-transferase family.

The protein resides in the cytoplasm. It carries out the reaction N-terminal L-lysyl-[protein] + L-leucyl-tRNA(Leu) = N-terminal L-leucyl-L-lysyl-[protein] + tRNA(Leu) + H(+). The enzyme catalyses N-terminal L-arginyl-[protein] + L-leucyl-tRNA(Leu) = N-terminal L-leucyl-L-arginyl-[protein] + tRNA(Leu) + H(+). The catalysed reaction is L-phenylalanyl-tRNA(Phe) + an N-terminal L-alpha-aminoacyl-[protein] = an N-terminal L-phenylalanyl-L-alpha-aminoacyl-[protein] + tRNA(Phe). Functionally, functions in the N-end rule pathway of protein degradation where it conjugates Leu, Phe and, less efficiently, Met from aminoacyl-tRNAs to the N-termini of proteins containing an N-terminal arginine or lysine. This chain is Leucyl/phenylalanyl-tRNA--protein transferase, found in Dinoroseobacter shibae (strain DSM 16493 / NCIMB 14021 / DFL 12).